We begin with the raw amino-acid sequence, 70 residues long: Small ribosomal subunit protein bS21 (70 aa).

It belongs to the bacterial ribosomal protein bS21 family.

This chain is Small ribosomal subunit protein bS21, found in Helicobacter pylori (strain P12).